We begin with the raw amino-acid sequence, 378 residues long: B3 domain-containing protein Os03g0622200 (378 aa).

A DNA-binding region (TF-B3 1) is located at residues 29–124 (SKHFLKHMVG…SFDVLIFDPS (96 aa)). The interval 140-159 (GRAENSAGAEQGGRNGRRTP) is disordered. The segment at residues 256 to 370 (FVQVIHSSHV…TMTVHVLRRV (115 aa)) is a DNA-binding region (TF-B3 2).

It localises to the nucleus. In Oryza sativa subsp. japonica (Rice), this protein is B3 domain-containing protein Os03g0622200.